A 120-amino-acid chain; its full sequence is Ribosome-binding factor A (120 aa).

This sequence belongs to the RbfA family. As to quaternary structure, monomer. Binds 30S ribosomal subunits, but not 50S ribosomal subunits or 70S ribosomes.

It localises to the cytoplasm. In terms of biological role, one of several proteins that assist in the late maturation steps of the functional core of the 30S ribosomal subunit. Associates with free 30S ribosomal subunits (but not with 30S subunits that are part of 70S ribosomes or polysomes). Required for efficient processing of 16S rRNA. May interact with the 5'-terminal helix region of 16S rRNA. This Desulforamulus reducens (strain ATCC BAA-1160 / DSM 100696 / MI-1) (Desulfotomaculum reducens) protein is Ribosome-binding factor A.